A 422-amino-acid chain; its full sequence is Receptor homology region, transmembrane domain- and RING domain-containing protein 3 (422 aa).

Positions 1 to 22 (MNLVVLLILTLLLFIVSYVVDA) are cleaved as a signal peptide. At 23–168 (GQVILVDSNI…NTEDSVWSLY (146 aa)) the chain is on the lumenal side. N31 carries N-linked (GlcNAc...) asparagine glycosylation. Residues C64 and C89 are joined by a disulfide bond. One can recognise a PA domain in the interval 81–146 (LVLIIRGGCS…RAGEMLKKYA (66 aa)). The helical transmembrane segment at 169–189 (ASIALILSLAIFCVMVTCVFF) threads the bilayer. Residues 190–422 (YRYCSTIRNS…HFASAHSLPD (233 aa)) are Cytoplasmic-facing. The segment at 232 to 274 (CAICLEDYIVGDKLRVLPCSHKFHVACVDSWLISWRTFCPVCK) adopts an RING-type; atypical zinc-finger fold. The segment at 344–368 (LRRQASPLQSSSQRSHLSMKSSHSL) is disordered. A compositionally biased stretch (polar residues) spans 349-368 (SPLQSSSQRSHLSMKSSHSL).

It localises to the prevacuolar compartment membrane. The protein localises to the protein storage vacuole membrane. Functionally, involved in the trafficking of vacuolar proteins. May function as a sorting receptor for protein trafficking to the protein storage vacuole (PSV). The chain is Receptor homology region, transmembrane domain- and RING domain-containing protein 3 (RMR3) from Arabidopsis thaliana (Mouse-ear cress).